Reading from the N-terminus, the 220-residue chain is Translin-1 (220 aa).

This sequence belongs to the translin family. Forms an octameric ring-shaped structure, which is capable of binding DNA or RNA.

The protein localises to the cytoplasm. It localises to the nucleus. Functionally, DNA-binding protein that specifically recognizes consensus sequences at the breakpoint junctions in chromosomal translocations. Selectively binds single-stranded d(GT)n and d(GTT)n microsatellite repeats. Has much higher affinities for the homologous RNA sequences (GU)n and (GUU)n. Does not bind double-stranded DNA. Has a role in meiosis. In Schizosaccharomyces pombe (strain 972 / ATCC 24843) (Fission yeast), this protein is Translin-1 (tsn1).